The following is a 1153-amino-acid chain: Otoancorin (1153 aa).

The first 22 residues, Met-1–Ser-22, serve as a signal peptide directing secretion. The N-linked (GlcNAc...) asparagine glycan is linked to Asn-156. The N-linked (GlcNAc...) (complex) asparagine glycan is linked to Asn-211. N-linked (GlcNAc...) asparagine glycosylation is found at Asn-244, Asn-289, Asn-321, Asn-394, Asn-398, Asn-460, Asn-544, Asn-812, Asn-911, and Asn-974. The tract at residues His-1109 to Ser-1128 is disordered. Residue Ala-1130 is the site of GPI-anchor amidated alanine attachment. A propeptide spans Gly-1131–Trp-1153 (removed in mature form).

The protein belongs to the stereocilin family.

The protein resides in the apical cell membrane. The protein localises to the secreted. It is found in the extracellular space. It localises to the extracellular matrix. May act as an adhesion molecule. This is Otoancorin (OTOA) from Homo sapiens (Human).